The sequence spans 161 residues: Nucleotide-binding protein Csal_2524 (161 aa).

It belongs to the YajQ family.

In terms of biological role, nucleotide-binding protein. The polypeptide is Nucleotide-binding protein Csal_2524 (Chromohalobacter salexigens (strain ATCC BAA-138 / DSM 3043 / CIP 106854 / NCIMB 13768 / 1H11)).